Here is a 338-residue protein sequence, read N- to C-terminus: MKVFYDKDCDLSIIQGKKVAIIGYGSQGHAQACNLKDSGVDVTIGLRKGSATVAKAEAHGLKVTDVATAVAAADLVMILTPDEFQGQLYKQEIEPNIKKGATLAFSHGFAIHYNQVVPRADLDVIMIAPKAPGHTVRSEFVKGGGIPDLIAIYQDASGNAKNVALSYASGVGGGRTGIIETTFKDETETDLFGEQAVLCGGTVELVKAGFETLVEAGYAPEMAYFECLHELKLIVDLMYEGGIANMNYSISNNAEYGEYVTGPEVINEESRKAMRNALKRIQDGEYAKMFISEGATNYPSMTAKRRNNAAHGIEIIGEQLRSMMPWISANKIVDKTKN.

Residues 1–181 form the KARI N-terminal Rossmann domain; that stretch reads MKVFYDKDCD…GGGRTGIIET (181 aa). Residues 24-27, Arg47, Ser50, Thr52, and 82-85 each bind NADP(+); these read YGSQ and DEFQ. Residue His107 is part of the active site. Gly133 lines the NADP(+) pocket. The KARI C-terminal knotted domain maps to 182–327; that stretch reads TFKDETETDL…EQLRSMMPWI (146 aa). Asp190, Glu194, Glu226, and Glu230 together coordinate Mg(2+). Residue Ser251 participates in substrate binding.

Belongs to the ketol-acid reductoisomerase family. Mg(2+) is required as a cofactor.

It carries out the reaction (2R)-2,3-dihydroxy-3-methylbutanoate + NADP(+) = (2S)-2-acetolactate + NADPH + H(+). It catalyses the reaction (2R,3R)-2,3-dihydroxy-3-methylpentanoate + NADP(+) = (S)-2-ethyl-2-hydroxy-3-oxobutanoate + NADPH + H(+). It functions in the pathway amino-acid biosynthesis; L-isoleucine biosynthesis; L-isoleucine from 2-oxobutanoate: step 2/4. It participates in amino-acid biosynthesis; L-valine biosynthesis; L-valine from pyruvate: step 2/4. Functionally, involved in the biosynthesis of branched-chain amino acids (BCAA). Catalyzes an alkyl-migration followed by a ketol-acid reduction of (S)-2-acetolactate (S2AL) to yield (R)-2,3-dihydroxy-isovalerate. In the isomerase reaction, S2AL is rearranged via a Mg-dependent methyl migration to produce 3-hydroxy-3-methyl-2-ketobutyrate (HMKB). In the reductase reaction, this 2-ketoacid undergoes a metal-dependent reduction by NADPH to yield (R)-2,3-dihydroxy-isovalerate. The chain is Ketol-acid reductoisomerase (NADP(+)) from Pseudomonas entomophila (strain L48).